We begin with the raw amino-acid sequence, 404 residues long: Exodeoxyribonuclease 7 large subunit (404 aa).

This sequence belongs to the XseA family. Heterooligomer composed of large and small subunits.

It localises to the cytoplasm. The catalysed reaction is Exonucleolytic cleavage in either 5'- to 3'- or 3'- to 5'-direction to yield nucleoside 5'-phosphates.. In terms of biological role, bidirectionally degrades single-stranded DNA into large acid-insoluble oligonucleotides, which are then degraded further into small acid-soluble oligonucleotides. The sequence is that of Exodeoxyribonuclease 7 large subunit from Fusobacterium nucleatum subsp. nucleatum (strain ATCC 25586 / DSM 15643 / BCRC 10681 / CIP 101130 / JCM 8532 / KCTC 2640 / LMG 13131 / VPI 4355).